A 358-amino-acid chain; its full sequence is Putative cell-type specific agglutination protein pfl7 (358 aa).

A signal peptide spans 1-23; it reads MNSLKSLCLKCIVTLCLLVNAFA. N-linked (GlcNAc...) asparagine glycosylation is found at Asn-67, Asn-88, Asn-112, and Asn-136. Residues 90-144 are disordered; the sequence is TISTSSSTPITASVPTSSSILSNSTIPTTSPVPTTSSTPTSSSILSNSTIPSSSS. A run of 2 repeats spans residues 148 to 180 and 181 to 218. Residues 148–218 form a 2 X 36 AA approximate tandem repeats region; sequence STITTTIISG…GLVEVITPSC (71 aa). One can recognise a DIPSY domain in the interval 207–358; sequence QSGLVEVITP…RADDVILVAY (152 aa). N-linked (GlcNAc...) asparagine glycosylation is found at Asn-245 and Asn-305.

This sequence belongs to the mam3/map4 family.

It localises to the cell surface. In terms of biological role, may be involved in agglutination during conjugation or other aspects of colony formation. Induces flocculation when overexpressed. In Schizosaccharomyces pombe (strain 972 / ATCC 24843) (Fission yeast), this protein is Putative cell-type specific agglutination protein pfl7.